We begin with the raw amino-acid sequence, 311 residues long: Tyrosine recombinase XerC (311 aa).

The Core-binding (CB) domain occupies 14-100 (ESLNETAKKF…SLRTFYKVLL (87 aa)). One can recognise a Tyr recombinase domain in the interval 121-303 (EVPKNFRINE…SKEKIKEVYR (183 aa)). Catalysis depends on residues Arg163, Lys187, His255, Arg258, and His281. Tyr290 functions as the O-(3'-phospho-DNA)-tyrosine intermediate in the catalytic mechanism.

Belongs to the 'phage' integrase family. XerC subfamily. Forms a cyclic heterotetrameric complex composed of two molecules of XerC and two molecules of XerD.

The protein resides in the cytoplasm. In terms of biological role, site-specific tyrosine recombinase, which acts by catalyzing the cutting and rejoining of the recombining DNA molecules. The XerC-XerD complex is essential to convert dimers of the bacterial chromosome into monomers to permit their segregation at cell division. It also contributes to the segregational stability of plasmids. In Leptospira interrogans serogroup Icterohaemorrhagiae serovar copenhageni (strain Fiocruz L1-130), this protein is Tyrosine recombinase XerC.